Here is a 249-residue protein sequence, read N- to C-terminus: Aquaporin SIP2-1 (249 aa).

Transmembrane regions (helical) follow at residues 12 to 32 and 53 to 73; these read PWLVVGDLALAAAWVCAGALV and VSLSLVYMFLFAWLEAASGGA. The NPA 1 signature appears at 76-78; the sequence is NPL. A run of 4 helical transmembrane segments spans residues 104-124, 133-155, 176-196, and 210-230; these read AQVIGAVLGVKLIQVTFPNVG, AHHGALAEGLATFMVVMVSVTLK, IHLLSSDITGGIMNPASAFAW, and LVYWLAPLQATLLGVWAVTFF. The short motif at 189–191 is the NPA 2 element; it reads NPA.

The protein belongs to the MIP/aquaporin (TC 1.A.8) family. SIP (TC 1.A.8.10) subfamily.

It localises to the membrane. Aquaporins facilitate the transport of water and small neutral solutes across cell membranes. This Zea mays (Maize) protein is Aquaporin SIP2-1 (SIP2-1).